The sequence spans 181 residues: Adenylate kinase (181 aa).

10 to 15 (GAGKGT) contributes to the ATP binding site. Residues 30–59 (STGDLFRKNIGDGTPLGLEAKRYLDAGDLV) are NMP. Residues Thr-31, Arg-36, 57-59 (DLV), 85-88 (GYPR), and Gln-92 each bind AMP. An LID region spans residues 126 to 132 (GRGRADD). An ATP-binding site is contributed by Arg-127. 2 residues coordinate AMP: Arg-129 and Arg-140. Residue Gly-166 participates in ATP binding.

Belongs to the adenylate kinase family. Monomer.

The protein resides in the cytoplasm. The catalysed reaction is AMP + ATP = 2 ADP. The protein operates within purine metabolism; AMP biosynthesis via salvage pathway; AMP from ADP: step 1/1. Functionally, catalyzes the reversible transfer of the terminal phosphate group between ATP and AMP. Plays an important role in cellular energy homeostasis and in adenine nucleotide metabolism. The chain is Adenylate kinase from Mycolicibacterium smegmatis (strain ATCC 700084 / mc(2)155) (Mycobacterium smegmatis).